The following is a 288-amino-acid chain: Aminoglycoside N(3)-acetyltransferase VII (288 aa).

It belongs to the antibiotic N-acetyltransferase family.

The catalysed reaction is a 2-deoxystreptamine antibiotic + acetyl-CoA = an N(3)-acetyl-2-deoxystreptamine antibiotic + CoA + H(+). Resistance to paromomycin. In Streptomyces paromomycinus (Streptomyces rimosus subsp. paromomycinus), this protein is Aminoglycoside N(3)-acetyltransferase VII (aacC7).